A 396-amino-acid polypeptide reads, in one-letter code: Capsular polysaccharide biosynthesis protein CapF (396 aa).

The next 12 helical transmembrane spans lie at Tyr-7–Val-27, Ala-41–Val-61, Ala-74–Gly-94, Ile-101–Tyr-121, Leu-129–Tyr-149, His-153–Ile-173, Ile-198–Ile-218, Leu-232–Ile-252, Met-279–Glu-299, Ile-315–Thr-335, Leu-351–Leu-371, and Gly-372–Tyr-392.

Belongs to the polysaccharide synthase family.

The protein resides in the cell membrane. Its pathway is capsule biogenesis; capsule polysaccharide biosynthesis. In terms of biological role, required for the biosynthesis of type 1 capsular polysaccharide. This Staphylococcus aureus protein is Capsular polysaccharide biosynthesis protein CapF (capF).